Here is a 545-residue protein sequence, read N- to C-terminus: Chaperonin GroEL 2 (545 aa).

ATP is bound by residues threonine 29–proline 32, aspartate 86–threonine 90, glycine 413, asparagine 479–alanine 481, and aspartate 495.

It belongs to the chaperonin (HSP60) family. In terms of assembly, forms a cylinder of 14 subunits composed of two heptameric rings stacked back-to-back. Interacts with the co-chaperonin GroES.

The protein localises to the cytoplasm. The enzyme catalyses ATP + H2O + a folded polypeptide = ADP + phosphate + an unfolded polypeptide.. Functionally, together with its co-chaperonin GroES, plays an essential role in assisting protein folding. The GroEL-GroES system forms a nano-cage that allows encapsulation of the non-native substrate proteins and provides a physical environment optimized to promote and accelerate protein folding. This Prochlorococcus marinus (strain MIT 9301) protein is Chaperonin GroEL 2.